Consider the following 472-residue polypeptide: Putative ankyrin repeat protein L675 (472 aa).

ANK repeat units follow at residues 125–156 (YKAN…DIHL), 187–216 (DNFK…NETI), 265–295 (YKTK…DKDI), 297–323 (HAML…NIHY), 325–351 (NDQA…GMDS), 352–381 (NNVF…DVNA), 382–411 (NNRS…DIKI), and 413–440 (DTVI…SCDD).

The protein is Putative ankyrin repeat protein L675 of Acanthamoeba polyphaga (Amoeba).